The primary structure comprises 189 residues: MYLVVGLGNIGKEYKKTRHNIGFDVVDIIAEKYNIEINRQKFKGSYGEGRIGNEKIILLKPSTYMNLSGESVIEAANFYKIDKENIIVIYDDMSIDIGKLRVRGKGSAGGHNGIKNIIQHLNSDIFPRVRVGIGQPDENVVNYVLGKFSKDEREIIEKVLAMSAKACISIVEDGVTEAMNKYNGVKIEV.

Tyrosine 14 is a binding site for tRNA. Histidine 19 (proton acceptor) is an active-site residue. 3 residues coordinate tRNA: tyrosine 64, asparagine 66, and asparagine 112.

This sequence belongs to the PTH family. As to quaternary structure, monomer.

The protein localises to the cytoplasm. It catalyses the reaction an N-acyl-L-alpha-aminoacyl-tRNA + H2O = an N-acyl-L-amino acid + a tRNA + H(+). Hydrolyzes ribosome-free peptidyl-tRNAs (with 1 or more amino acids incorporated), which drop off the ribosome during protein synthesis, or as a result of ribosome stalling. Functionally, catalyzes the release of premature peptidyl moieties from peptidyl-tRNA molecules trapped in stalled 50S ribosomal subunits, and thus maintains levels of free tRNAs and 50S ribosomes. The protein is Peptidyl-tRNA hydrolase of Clostridium botulinum (strain Kyoto / Type A2).